Reading from the N-terminus, the 307-residue chain is Urease accessory protein UreD (307 aa).

The protein belongs to the UreD family. In terms of assembly, ureD, UreF and UreG form a complex that acts as a GTP-hydrolysis-dependent molecular chaperone, activating the urease apoprotein by helping to assemble the nickel containing metallocenter of UreC. The UreE protein probably delivers the nickel.

It localises to the cytoplasm. Functionally, required for maturation of urease via the functional incorporation of the urease nickel metallocenter. The protein is Urease accessory protein UreD of Prochlorococcus marinus (strain NATL1A).